The sequence spans 412 residues: Tyrosine--tRNA ligase (412 aa).

Tyrosine 31 is a binding site for L-tyrosine. The 'HIGH' region signature appears at 36–45; that stretch reads PTAPSLHIGH. Residues tyrosine 162 and glutamine 166 each contribute to the L-tyrosine site. The 'KMSKS' region motif lies at 222-226; sequence KIGKT. Lysine 225 lines the ATP pocket. Positions 345–411 constitute an S4 RNA-binding domain; that stretch reads KRWLDIVVEL…GKRKKQVIDL (67 aa).

The protein belongs to the class-I aminoacyl-tRNA synthetase family. TyrS type 1 subfamily. In terms of assembly, homodimer.

It localises to the cytoplasm. The enzyme catalyses tRNA(Tyr) + L-tyrosine + ATP = L-tyrosyl-tRNA(Tyr) + AMP + diphosphate + H(+). In terms of biological role, catalyzes the attachment of tyrosine to tRNA(Tyr) in a two-step reaction: tyrosine is first activated by ATP to form Tyr-AMP and then transferred to the acceptor end of tRNA(Tyr). The chain is Tyrosine--tRNA ligase from Chlamydia trachomatis serovar L2 (strain ATCC VR-902B / DSM 19102 / 434/Bu).